Consider the following 594-residue polypeptide: MKLSLTIVSSSFLVAIAHAASVQFNLIAPSATDVKVSVNGQQVALTASDPNVPYFTGSAEVGGTEESFERSLAGITNSTFNDFYNRPVTYANLPQLPWPIENDPQWTRKGKKAEIFDDNYIPSVFFHGDDSQVQDLVKNVPKDKVTGTLTFIGSNYVHSFANVSFGIHGAGKKHNNAKQSWKWTLSGTDTMGNRNHFKLRHMEEDPTQIRERLYADILHAMGTYANETTMVRLFINGQGFGTFNMLDDITEFSYINAMFYGGNPPATLGPLFDGASGADFIYHPGNLDGYSSWKPNKDNANGEGYEAFDPLCKAWNETDYTDNTAIANFEKMFDTEHFLRFMVIEYLTAHWDGYWMGQTNDGAYRDPSDNNKWYFLDQDFDATFGVNLDVPENKDFISVSYKDFPSRYPAGVMANGLLQNADKKAKFEQYLTETVRVLFNNVTLTNRVLAIHNFLSPDLEWDRSIVQQSPGTNFGWTFEQTSQNLWQGVSAPNNNGGGAEWGLVEYIAAKSQAMAKEFNITIVSEPVGPPAANGTATSTNDGGNTHTAAGESKPASSSESSGSKIASQSVSGASRSAVSTVLLGVTALVATAIF.

The signal sequence occupies residues 1–19; the sequence is MKLSLTIVSSSFLVAIAHA. N-linked (GlcNAc...) asparagine glycosylation is found at asparagine 77, asparagine 162, asparagine 226, asparagine 316, asparagine 441, asparagine 519, and asparagine 533. The disordered stretch occupies residues 529–565; that stretch reads PPAANGTATSTNDGGNTHTAAGESKPASSSESSGSKI. Over residues 534–547 the composition is skewed to polar residues; the sequence is GTATSTNDGGNTHT. Low complexity predominate over residues 548–565; the sequence is AAGESKPASSSESSGSKI. Serine 571 is lipidated: GPI-anchor amidated serine. A propeptide spans 572-594 (removed in mature form); sequence GASRSAVSTVLLGVTALVATAIF.

Interacts with host epithelial cell surface HSPA5/BiP protein.

Its subcellular location is the cell membrane. Promotes invasion of host epithelial cells by adhering to receptors on the host cell surface to facilitate endocytosis of the pathogen into host cells. Binds HSPA5/BiP protein on the cell surface of host epithelial cells. This is Invasin CotH2 from Rhizopus delemar (strain RA 99-880 / ATCC MYA-4621 / FGSC 9543 / NRRL 43880) (Mucormycosis agent).